The following is a 590-amino-acid chain: Aspartate--tRNA(Asp/Asn) ligase (590 aa).

E173 provides a ligand contact to L-aspartate. Positions 197–200 are aspartate; sequence QIFK. Position 219 (R219) interacts with L-aspartate. ATP contacts are provided by residues 219 to 221 and Q228; that span reads RDE. L-aspartate is bound at residue H450. E484 contributes to the ATP binding site. R491 provides a ligand contact to L-aspartate. 536 to 539 lines the ATP pocket; it reads GLDR.

This sequence belongs to the class-II aminoacyl-tRNA synthetase family. Type 1 subfamily. As to quaternary structure, homodimer.

Its subcellular location is the cytoplasm. The enzyme catalyses tRNA(Asx) + L-aspartate + ATP = L-aspartyl-tRNA(Asx) + AMP + diphosphate. Functionally, aspartyl-tRNA synthetase with relaxed tRNA specificity since it is able to aspartylate not only its cognate tRNA(Asp) but also tRNA(Asn). Reaction proceeds in two steps: L-aspartate is first activated by ATP to form Asp-AMP and then transferred to the acceptor end of tRNA(Asp/Asn). The polypeptide is Aspartate--tRNA(Asp/Asn) ligase (Coxiella burnetii (strain RSA 331 / Henzerling II)).